Here is a 511-residue protein sequence, read N- to C-terminus: uncharacterized protein (511 aa).

This is an uncharacterized protein from Acanthamoeba polyphaga (Amoeba).